The primary structure comprises 394 residues: Elongation factor Tu (394 aa).

The tr-type G domain maps to 10–204 (KPHVNIGTIG…AVDSYIPQPV (195 aa)). The G1 stretch occupies residues 19–26 (GHVDHGKT). GTP is bound at residue 19–26 (GHVDHGKT). Thr26 lines the Mg(2+) pocket. The segment at 60-64 (GITIS) is G2. The segment at 81–84 (DCPG) is G3. GTP-binding positions include 81–85 (DCPGH) and 136–139 (NKVD). Positions 136 to 139 (NKVD) are G4. The segment at 174–176 (SAL) is G5.

It belongs to the TRAFAC class translation factor GTPase superfamily. Classic translation factor GTPase family. EF-Tu/EF-1A subfamily. Monomer.

It is found in the cytoplasm. It catalyses the reaction GTP + H2O = GDP + phosphate + H(+). GTP hydrolase that promotes the GTP-dependent binding of aminoacyl-tRNA to the A-site of ribosomes during protein biosynthesis. The polypeptide is Elongation factor Tu (Rickettsia rhipicephali).